The sequence spans 416 residues: Calreticulin (416 aa).

Positions 1 to 27 (MATQRRANPSSLHLITVFSLLVAVVSA) are cleaved as a signal peptide. Residue N59 is glycosylated (N-linked (GlcNAc...) asparagine). C113 and C145 are disulfide-bonded. An alpha-D-glucoside-binding residues include Y117, K119, Y136, and D143. N159 is a glycosylation site (N-linked (GlcNAc...) asparagine). 7 repeat units span residues 199–210 (KQSGSLYSDWDL), 218–229 (DPSAKKPEDWDE), 235–246 (DPEDKKPEGYDD), 253–264 (DPDAKKPEDWDD), 268–278 (GEWTAPTIPNP), 282–292 (GPWKPKKIKNP), and 296–306 (GKWKAPLIDNP). The segment at 199 to 264 (KQSGSLYSDW…DAKKPEDWDD (66 aa)) is 4 X approximate repeats. Basic and acidic residues predominate over residues 215–225 (TIKDPSAKKPE). The segment at 215 to 286 (TIKDPSAKKP…NPEYKGPWKP (72 aa)) is disordered. 2 stretches are compositionally biased toward acidic residues: residues 226-236 (DWDEKEFIDDP) and 244-253 (YDDIPEEITD). Positions 268 to 306 (GEWTAPTIPNPEYKGPWKPKKIKNPNYKGKWKAPLIDNP) are 3 X approximate repeats. E326 is a binding site for an alpha-D-glucoside. Residues 355–380 (TWGKQKDAEKAAFEEAEKKREEEESK) show a composition bias toward basic and acidic residues. A disordered region spans residues 355-416 (TWGKQKDAEK…SKDDEAHDEL (62 aa)). Positions 386 to 403 (SDAEEDDDADDDSDDADD) are enriched in acidic residues. Basic and acidic residues predominate over residues 404-416 (KSESKDDEAHDEL). A Prevents secretion from ER motif is present at residues 413–416 (HDEL).

It belongs to the calreticulin family.

It localises to the endoplasmic reticulum lumen. Its function is as follows. Molecular calcium-binding chaperone promoting folding, oligomeric assembly and quality control in the ER via the calreticulin/calnexin cycle. This lectin may interact transiently with almost all of the monoglucosylated glycoproteins that are synthesized in the ER. This chain is Calreticulin (CAL1), found in Nicotiana plumbaginifolia (Leadwort-leaved tobacco).